We begin with the raw amino-acid sequence, 910 residues long: MPLRLDIKRKLAQRSERAKSVDLHPTEPWILSSLYSGSVCIWNYQTQTMVKSFEVTELPVRSSKFITRKQWVVAGADDMFIRVYNYNTMDKVKVFEAHTDYIRCVAVHPTQPFVLSSSDDMLIKLWDWDKGWMCTQIFEGHSHYVMQVTFNPKDTNTFASASLDRTVKVWSLGSPDPNFTLDGHSKGVNCVDYFTGGDRPYLITGSDDQTAKVWDYQTKSCVQTLEGHAHNVSAVCFHPELPIILTGSEDGTVRLWHSTTYRLENTLNYGLERVWALGYMKGSRRVVIGYDEGTIMIKIGREVPVASMDSSGKIIWSKHNEIQTVNIKTIGADNEIADGERLPLVVKELGTCDLYPQSLRHNPNGRFVVVCGDGEYIIYTALAWRNRSFGSALEFVWSLDGEYAVRESTSRIKIYSKNFQERKSIRPPFSAERIFGGVLLAMCTNDFICFHDWAEGRMIRRIDVNVKNLYWADSGDLVTIASDTSFYILKYNRDVVSSHLDGGGSVGEEGVEDAFELLHEINERIRTGLWVGDCFIYNNSSSRLNYCVGGEVTTLFHLDRQMYLLGYLANQSRVYLIDKQFNVVGYTLLLTMIEYKTLVMRGDFDRANALLPSIPKEQHDSVARFLESRGMLEEALEIATDSNYRFDLAVQLGRLEVAKAIAIEAQSESKWRQLGELAMSTGKLDMAEECLLHAMDLSGLLLLYSSLGDAEGLTKLTSMAKEQGKNNVAFLCFFMLGKLEECLQLLIESNRIPEAALMSRSYLPSKVPEIVTLWKKDLQKVNPKAAESLADPNEYPNLFEDWQIALNVEANVAPKRGIYAPAKEYIIHAERPNETLVEAFKNMRIHQEEVLPDENGDDTHEAIEENGVEESQEDAVEVDVEADGSTDGTVLVNGNDTEEQWGTNNEESLA.

WD repeat units follow at residues glutamine 13–serine 52, valine 55–valine 94, alanine 97–glutamine 136, glycine 140–threonine 180, glycine 183–threonine 224, glycine 227–threonine 266, tyrosine 269–aspartate 309, threonine 351–leucine 393, and arginine 461–aspartate 501. Acidic residues predominate over residues glutamate 865 to glycine 884. Positions glutamate 865–alanine 910 are disordered. Over residues threonine 886 to alanine 910 the composition is skewed to polar residues.

Belongs to the WD repeat COPB2 family. In terms of assembly, oligomeric complex that consists of at least the alpha, beta, beta', gamma, delta, epsilon and zeta subunits.

It localises to the cytoplasm. It is found in the golgi apparatus membrane. Its subcellular location is the cytoplasmic vesicle. The protein resides in the COPI-coated vesicle membrane. In terms of biological role, the coatomer is a cytosolic protein complex that binds to dilysine motifs and reversibly associates with Golgi non-clathrin-coated vesicles, which further mediate biosynthetic protein transport from the ER, via the Golgi up to the trans Golgi network. Coatomer complex is required for budding from Golgi membranes, and is essential for the retrograde Golgi-to-ER transport of dilysine-tagged proteins. The protein is Putative coatomer subunit beta'-3 of Oryza sativa subsp. japonica (Rice).